We begin with the raw amino-acid sequence, 497 residues long: Acetyl-coenzyme A carboxylase carboxyl transferase subunit beta, chloroplastic (497 aa).

The 268-residue stretch at 230–497 folds into the CoA carboxyltransferase N-terminal domain; it reads LWVQCENCYG…FFPVNSNSIK (268 aa). Zn(2+)-binding residues include Cys-234, Cys-237, Cys-253, and Cys-256. A C4-type zinc finger spans residues 234 to 256; the sequence is CENCYGLNYKKFFRSKFNICEQC.

The protein belongs to the AccD/PCCB family. As to quaternary structure, acetyl-CoA carboxylase is a heterohexamer composed of biotin carboxyl carrier protein, biotin carboxylase and 2 subunits each of ACCase subunit alpha and ACCase plastid-coded subunit beta (accD). Zn(2+) is required as a cofactor.

The protein localises to the plastid. It is found in the chloroplast stroma. The catalysed reaction is N(6)-carboxybiotinyl-L-lysyl-[protein] + acetyl-CoA = N(6)-biotinyl-L-lysyl-[protein] + malonyl-CoA. Its pathway is lipid metabolism; malonyl-CoA biosynthesis; malonyl-CoA from acetyl-CoA: step 1/1. Component of the acetyl coenzyme A carboxylase (ACC) complex. Biotin carboxylase (BC) catalyzes the carboxylation of biotin on its carrier protein (BCCP) and then the CO(2) group is transferred by the transcarboxylase to acetyl-CoA to form malonyl-CoA. In Nandina domestica (Heavenly bamboo), this protein is Acetyl-coenzyme A carboxylase carboxyl transferase subunit beta, chloroplastic.